The primary structure comprises 623 residues: Pyranose 2-oxidase (623 aa).

The N-terminal stretch at 1–28 is a signal peptide; that stretch reads MSTSSSDPFFNFAKSSFRSAAAQKASAS. Positions 29-38 are excised as a propeptide; the sequence is SLPPLPGPDK. A Tele-8alpha-FAD histidine modification is found at His-167. Substrate is bound by residues Gln-448 and His-450. Residue His-548 is the Proton acceptor of the active site. Residue Asn-593 is part of the active site.

This sequence belongs to the GMC oxidoreductase family. In terms of assembly, homotetramer. Requires FAD as cofactor.

The protein localises to the periplasm. The enzyme catalyses D-glucose + O2 = 2-dehydro-D-glucose + H2O2. In terms of biological role, catalyzes the oxidation of various aldopyranoses and disaccharides on carbon-2 to the corresponding 2-keto sugars concomitant with the reduction of O(2) to H(2)O(2). Plays an important role in lignin degradation of wood rot fungi by supplying the essential cosubstrate H(2)O(2) for the ligninolytic peroxidases, lignin peroxidase and manganese-dependent peroxidase. The sequence is that of Pyranose 2-oxidase (p2ox) from Peniophora sp. (strain SG) (White-rot fungus).